We begin with the raw amino-acid sequence, 1422 residues long: FH1/FH2 domain-containing protein 3 (1422 aa).

Residues 18-411 form the GBD/FH3 domain; the sequence is NSTNFPEPSR…NFGNNSYHSS (394 aa). Disordered regions lie at residues 323 to 464, 521 to 666, 687 to 708, 754 to 781, 821 to 849, 1262 to 1305, 1320 to 1357, and 1374 to 1410; these read RHED…RRRQ, ACLA…GVNG, RKSP…QEAE, SGDL…VQPK, LGHR…PPLL, QQKQ…SYAE, SSPS…SPNV, and TQVP…EEAR. At Ser-345 the chain carries Phosphoserine. Basic residues predominate over residues 357 to 366; it reads LDRRRSRRHS. The span at 367 to 390 shows a compositional bias: polar residues; sequence VQSIKSTLSAPTSPCSQSAPSFKP. Ser-375 bears the Phosphoserine mark. Residues 410-430 are compositionally biased toward low complexity; the sequence is SSRPSSGSSVPTTPTSSVSPP. A compositionally biased stretch (polar residues) spans 438–449; sequence SSPSGLLTSSFR. Residues 448–480 adopt a coiled-coil conformation; that stretch reads FRQHQESLAAERERRRQEREERLQRIEREERNK. Basic and acidic residues predominate over residues 450–464; sequence QHQESLAAERERRRQ. Over residues 521 to 535 the composition is skewed to low complexity; sequence ACLAPLSHSPSSSDS. A compositionally biased stretch (polar residues) spans 536-547; that stretch reads QEALTVSASSPG. Acidic residues-rich tracts occupy residues 559-569 and 592-603; these read PEPESEAEPEA and ETEVEQALEQEP. Residues 604–624 are compositionally biased toward basic and acidic residues; that stretch reads EERASLSEKERQNEGVNERDN. Over residues 626-635 the composition is skewed to low complexity; the sequence is SASSVSSSSS. Residues 637–651 show a composition bias toward basic and acidic residues; it reads LEREEKEDKLSRDRT. At Ser-763 the chain carries Phosphoserine. Position 775 is a phosphothreonine (Thr-775). Pro residues predominate over residues 827–849; the sequence is PGPPPPPPPTFLGLPPPPPPPLL. An FH1 domain is found at 827-858; the sequence is PGPPPPPPPTFLGLPPPPPPPLLDSIPPPPVP. In terms of domain architecture, FH2 spans 883–1279; it reads GQPTFTKKKK…HRERNKTRGK (397 aa). Over residues 1264-1278 the composition is skewed to basic residues; it reads KQKRANHRERNKTRG. In terms of domain architecture, DAD spans 1359 to 1391; it reads DDAADEIMDRIVKSATQVPSQRVVPRERKRSRA. The span at 1385–1400 shows a compositional bias: basic residues; it reads ERKRSRANRKSLRRTL.

This sequence belongs to the formin homology family. As to quaternary structure, interacts with nestin/NES-based interfilament (IF). Interacts with SQSTM1; isoform 4 threonine phosphorylation disrupts SQSTM1-binding. Post-translationally, phosphorylated on Thr-1474 and Thr-1476 by CK2. As to expression, expressed in the heart, kidney and brain. May be down-regulated in various types of heart diseases, including idiopathic dilated, ventricular dilated, familial dilated and perinatal dilated cardiomyopathies, as well as ischemic heart disease (at protein level).

It localises to the cytoplasm. It is found in the cytoskeleton. The protein localises to the myofibril. The protein resides in the sarcomere. Its subcellular location is the z line. Actin-organizing protein that may cause stress fiber formation together with cell elongation. Isoform 4 may play a role in actin filament polymerization in cardiomyocytes. The protein is FH1/FH2 domain-containing protein 3 (FHOD3) of Homo sapiens (Human).